We begin with the raw amino-acid sequence, 426 residues long: Glutamate-1-semialdehyde 2,1-aminomutase (426 aa).

Lysine 264 is subject to N6-(pyridoxal phosphate)lysine.

Belongs to the class-III pyridoxal-phosphate-dependent aminotransferase family. HemL subfamily. The cofactor is pyridoxal 5'-phosphate.

The protein resides in the cytoplasm. It catalyses the reaction (S)-4-amino-5-oxopentanoate = 5-aminolevulinate. It functions in the pathway porphyrin-containing compound metabolism; protoporphyrin-IX biosynthesis; 5-aminolevulinate from L-glutamyl-tRNA(Glu): step 2/2. In Methanocella arvoryzae (strain DSM 22066 / NBRC 105507 / MRE50), this protein is Glutamate-1-semialdehyde 2,1-aminomutase.